A 449-amino-acid polypeptide reads, in one-letter code: Bifunctional protein GlmU (449 aa).

The tract at residues 1-225 (MLSVAILAAG…NGELQGINNR (225 aa)) is pyrophosphorylase. Residues 7-10 (LAAG), K21, Q73, and 78-79 (GT) each bind UDP-N-acetyl-alpha-D-glucosamine. D103 is a Mg(2+) binding site. UDP-N-acetyl-alpha-D-glucosamine contacts are provided by G140, E154, N169, and N223. Residue N223 coordinates Mg(2+). The interval 226 to 246 (IQLSKCEEIIQNSIKEKHMLN) is linker. The N-acetyltransferase stretch occupies residues 247-449 (GVTFINQASC…NIDNWERKKP (203 aa)). Positions 328 and 346 each coordinate UDP-N-acetyl-alpha-D-glucosamine. The active-site Proton acceptor is H358. UDP-N-acetyl-alpha-D-glucosamine-binding residues include Y361 and N372. Residues A375, A418, and R435 each coordinate acetyl-CoA.

It in the N-terminal section; belongs to the N-acetylglucosamine-1-phosphate uridyltransferase family. In the C-terminal section; belongs to the transferase hexapeptide repeat family. As to quaternary structure, homotrimer. Requires Mg(2+) as cofactor.

It localises to the cytoplasm. The enzyme catalyses alpha-D-glucosamine 1-phosphate + acetyl-CoA = N-acetyl-alpha-D-glucosamine 1-phosphate + CoA + H(+). It carries out the reaction N-acetyl-alpha-D-glucosamine 1-phosphate + UTP + H(+) = UDP-N-acetyl-alpha-D-glucosamine + diphosphate. Its pathway is nucleotide-sugar biosynthesis; UDP-N-acetyl-alpha-D-glucosamine biosynthesis; N-acetyl-alpha-D-glucosamine 1-phosphate from alpha-D-glucosamine 6-phosphate (route II): step 2/2. The protein operates within nucleotide-sugar biosynthesis; UDP-N-acetyl-alpha-D-glucosamine biosynthesis; UDP-N-acetyl-alpha-D-glucosamine from N-acetyl-alpha-D-glucosamine 1-phosphate: step 1/1. It participates in bacterial outer membrane biogenesis; LPS lipid A biosynthesis. Catalyzes the last two sequential reactions in the de novo biosynthetic pathway for UDP-N-acetylglucosamine (UDP-GlcNAc). The C-terminal domain catalyzes the transfer of acetyl group from acetyl coenzyme A to glucosamine-1-phosphate (GlcN-1-P) to produce N-acetylglucosamine-1-phosphate (GlcNAc-1-P), which is converted into UDP-GlcNAc by the transfer of uridine 5-monophosphate (from uridine 5-triphosphate), a reaction catalyzed by the N-terminal domain. The sequence is that of Bifunctional protein GlmU from Prochlorococcus marinus (strain MIT 9312).